The sequence spans 375 residues: Methylthioribose-1-phosphate isomerase (375 aa).

D257 functions as the Proton donor in the catalytic mechanism.

Belongs to the eIF-2B alpha/beta/delta subunits family. MtnA subfamily.

The protein localises to the cytoplasm. It localises to the nucleus. It catalyses the reaction 5-(methylsulfanyl)-alpha-D-ribose 1-phosphate = 5-(methylsulfanyl)-D-ribulose 1-phosphate. It functions in the pathway amino-acid biosynthesis; L-methionine biosynthesis via salvage pathway; L-methionine from S-methyl-5-thio-alpha-D-ribose 1-phosphate: step 1/6. Catalyzes the interconversion of methylthioribose-1-phosphate (MTR-1-P) into methylthioribulose-1-phosphate (MTRu-1-P). This Leishmania major protein is Methylthioribose-1-phosphate isomerase.